A 416-amino-acid chain; its full sequence is Leu/Ile/Val-binding protein homolog 4 (416 aa).

The N-terminal stretch at 1–26 (MSLKVFLQAGVACAALSLAGAAGASA) is a signal peptide.

Belongs to the leucine-binding protein family.

In terms of biological role, component of an amino-acid transport system. The chain is Leu/Ile/Val-binding protein homolog 4 from Brucella melitensis biotype 1 (strain ATCC 23456 / CCUG 17765 / NCTC 10094 / 16M).